The following is a 267-amino-acid chain: Glutamate 5-kinase (267 aa).

K14 provides a ligand contact to ATP. The substrate site is built by S54, D141, and N157. ATP-binding positions include 177-178 and 219-225; these read SD and TGGMLSK.

It belongs to the glutamate 5-kinase family.

Its subcellular location is the cytoplasm. The enzyme catalyses L-glutamate + ATP = L-glutamyl 5-phosphate + ADP. It participates in amino-acid biosynthesis; L-proline biosynthesis; L-glutamate 5-semialdehyde from L-glutamate: step 1/2. In terms of biological role, catalyzes the transfer of a phosphate group to glutamate to form L-glutamate 5-phosphate. The chain is Glutamate 5-kinase from Streptococcus agalactiae serotype Ia (strain ATCC 27591 / A909 / CDC SS700).